A 729-amino-acid chain; its full sequence is MPKNSKVVKRELDDEVIESVKDLLSNEDSADDAFKKSELIVDVPEEKDTDVVERSEVKDARPAWNSKLQYILAQVGFSVGLGNVWRFPYLCQKNGGGAYLLPYLILLLVIGIPLFFLELSVGQRIRRGSIGVWNYISPQLGGIGFASCVVCFFVALYYNVIIGWSLFYFSQSFQQPLPWDQCPLVKNASHTFVEPECEKSSATTYYWYREALNISTSISESGGLNWKMTICLLAAWVVVCLAMIKGIQSSGKIMYFSSLFPYVVLICFLIRALLLNGSVDGIRHMFTPELEIMLEPKVWREAAAQVFFALGLGFGGVIAFSSYNKRDNNCHFDAVLVSFINFFTSILATLVVFAVLGFKANVINEKCIAENSEMIIKLVKMGNISQDIIPHHINFSAITAEDYDLIYDIIQKVKEEEFPALHLNACQIEDELNKAVQGTGLAFIAFTEAMTHFPASPFWSVMFFLMLVNLGLGSMFGTIEGIITPVVDTFKVRKEILTVICCLLAFCIGLIFVQRSGNYFVTMFDDYSATLPLLIVVILENIAVSFVYGIDKFMEDLKDMLGFTPNRYYYYMWKYISPLMLLSLLIASIVNMGLSPPGYNAWMEDKASEKFLSYPTWGMVICISLMVLAILPIPVVFIIRRCNLIDDSSGNLASVTYKRGRVLKEPVNLEGDDASLIHGKISSEMSSPNFGKNIYRKQSGSPTLDTAPNGRYGIGYLMADMPDMPESDL.

Topologically, residues 1-69 are cytoplasmic; sequence MPKNSKVVKR…ARPAWNSKLQ (69 aa). 2 positions are modified to phosphoserine: S25 and S55. 3 consecutive transmembrane segments (helical) span residues 70 to 90, 98 to 117, and 142 to 162; these read YILA…FPYL, AYLL…LFFL, and GIGF…NVII. The Extracellular portion of the chain corresponds to 163 to 225; sequence GWSLFYFSQS…TSISESGGLN (63 aa). Residues N187 and N213 are each glycosylated (N-linked (GlcNAc...) asparagine). Helical transmembrane passes span 226–244, 253–270, 306–323, and 335–356; these read WKMT…LAMI, IMYF…CFLI, VFFA…FSSY, and VLVS…FAVL. Topologically, residues 357 to 452 are extracellular; sequence GFKANVINEK…FIAFTEAMTH (96 aa). 2 N-linked (GlcNAc...) asparagine glycosylation sites follow: N383 and N394. 5 helical membrane-spanning segments follow: residues 453–472, 496–514, 530–550, 571–592, and 620–642; these read FPAS…NLGL, ILTV…IFVQ, TLPL…VYGI, YMWK…IVNM, and VICI…IRRC. At 643 to 729 the chain is on the cytoplasmic side; sequence NLIDDSSGNL…DMPDMPESDL (87 aa). A phosphoserine mark is found at S687, S699, and S701.

It belongs to the sodium:neurotransmitter symporter (SNF) (TC 2.A.22) family. SLC6A15 subfamily.

The protein localises to the membrane. The catalysed reaction is L-leucine(in) + Na(+)(in) = L-leucine(out) + Na(+)(out). The enzyme catalyses L-isoleucine(in) + Na(+)(in) = L-isoleucine(out) + Na(+)(out). It carries out the reaction L-methionine(in) + Na(+)(in) = L-methionine(out) + Na(+)(out). It catalyses the reaction L-proline(in) + Na(+)(in) = L-proline(out) + Na(+)(out). The catalysed reaction is L-alanine(in) + Na(+)(in) = L-alanine(out) + Na(+)(out). The enzyme catalyses L-asparagine(in) + Na(+)(in) = L-asparagine(out) + Na(+)(out). It carries out the reaction L-valine(in) + Na(+)(in) = L-valine(out) + Na(+)(out). It catalyses the reaction L-cysteine(in) + Na(+)(in) = L-cysteine(out) + Na(+)(out). The catalysed reaction is L-glutamine(in) + Na(+)(in) = L-glutamine(out) + Na(+)(out). The enzyme catalyses L-serine(in) + Na(+)(in) = L-serine(out) + Na(+)(out). It carries out the reaction L-threonine(in) + Na(+)(in) = L-threonine(out) + Na(+)(out). It catalyses the reaction L-pipecolate(in) + Na(+)(in) = L-pipecolate(out) + Na(+)(out). The catalysed reaction is L-phenylalanine(in) + Na(+)(in) = L-phenylalanine(out) + Na(+)(out). In terms of biological role, functions as a sodium-dependent neutral amino acid transporter. Exhibits preference for the branched-chain amino acids, particularly leucine, valine and isoleucine and methionine. Can also transport low-affinity substrates such as alanine, phenylalanine, glutamine and pipecolic acid. Mediates the saturable, pH-sensitive and electrogenic cotransport of proline and sodium ions with a stoichiometry of 1:1. May have a role as transporter for neurotransmitter precursors into neurons. In contrast to other members of the neurotransmitter transporter family, does not appear to be chloride-dependent. This chain is Sodium-dependent neutral amino acid transporter B(0)AT2 (SLC6A15), found in Bos taurus (Bovine).